Consider the following 157-residue polypeptide: Protein Smg (157 aa).

Belongs to the Smg family.

The sequence is that of Protein Smg from Sodalis glossinidius (strain morsitans).